A 515-amino-acid chain; its full sequence is 1-pyrroline-5-carboxylate dehydrogenase (515 aa).

Catalysis depends on residues glutamate 286 and cysteine 320.

It belongs to the aldehyde dehydrogenase family. RocA subfamily.

The catalysed reaction is L-glutamate 5-semialdehyde + NAD(+) + H2O = L-glutamate + NADH + 2 H(+). It functions in the pathway amino-acid degradation; L-proline degradation into L-glutamate; L-glutamate from L-proline: step 2/2. The sequence is that of 1-pyrroline-5-carboxylate dehydrogenase from Bacillus cereus (strain B4264).